A 1131-amino-acid polypeptide reads, in one-letter code: Filamin A-interacting protein 1-like (1131 aa).

The tract at residues 1-62 (MRSRSSNAEG…KSHTGKGHHT (62 aa)) is disordered. Basic and acidic residues predominate over residues 50–62 (VSEKSHTGKGHHT). Coiled-coil stretches lie at residues 139-583 (NELD…LSKV) and 610-780 (SKST…KSLR). Phosphoserine is present on S789. Residues T984 and T992 each carry the phosphothreonine modification. A Phosphoserine modification is found at S1050.

Belongs to the FILIP1 family.

It is found in the cytoplasm. It localises to the membrane. The protein resides in the nucleus. Its function is as follows. Acts as a regulator of the antiangiogenic activity on endothelial cells. When overexpressed in endothelial cells, leads to inhibition of cell proliferation and migration and an increase in apoptosis. Inhibits melanoma growth When expressed in tumor-associated vasculature. This Mus musculus (Mouse) protein is Filamin A-interacting protein 1-like (Filip1l).